Here is a 270-residue protein sequence, read N- to C-terminus: uncharacterized protein (270 aa).

The Proton donor role is filled by His-171. Cys-261 acts as the Nucleophile in catalysis.

It belongs to the DDAH family.

This is an uncharacterized protein from Aeropyrum pernix (strain ATCC 700893 / DSM 11879 / JCM 9820 / NBRC 100138 / K1).